The primary structure comprises 95 residues: Aspartyl/glutamyl-tRNA(Asn/Gln) amidotransferase subunit C (95 aa).

This sequence belongs to the GatC family. As to quaternary structure, heterotrimer of A, B and C subunits.

It carries out the reaction L-glutamyl-tRNA(Gln) + L-glutamine + ATP + H2O = L-glutaminyl-tRNA(Gln) + L-glutamate + ADP + phosphate + H(+). The enzyme catalyses L-aspartyl-tRNA(Asn) + L-glutamine + ATP + H2O = L-asparaginyl-tRNA(Asn) + L-glutamate + ADP + phosphate + 2 H(+). Allows the formation of correctly charged Asn-tRNA(Asn) or Gln-tRNA(Gln) through the transamidation of misacylated Asp-tRNA(Asn) or Glu-tRNA(Gln) in organisms which lack either or both of asparaginyl-tRNA or glutaminyl-tRNA synthetases. The reaction takes place in the presence of glutamine and ATP through an activated phospho-Asp-tRNA(Asn) or phospho-Glu-tRNA(Gln). The sequence is that of Aspartyl/glutamyl-tRNA(Asn/Gln) amidotransferase subunit C from Clostridium botulinum (strain Loch Maree / Type A3).